We begin with the raw amino-acid sequence, 470 residues long: Uronate isomerase (470 aa).

This sequence belongs to the metallo-dependent hydrolases superfamily. Uronate isomerase family.

The catalysed reaction is D-glucuronate = D-fructuronate. It carries out the reaction aldehydo-D-galacturonate = keto-D-tagaturonate. It functions in the pathway carbohydrate metabolism; pentose and glucuronate interconversion. This is Uronate isomerase from Escherichia coli O157:H7 (strain EC4115 / EHEC).